The sequence spans 202 residues: Putative 5'(3')-deoxyribonucleotidase (202 aa).

The active-site Nucleophile is the D22. Mg(2+)-binding residues include D22, D24, and D156. The active-site Proton donor is the D24.

The protein belongs to the 5'(3')-deoxyribonucleotidase family. Mg(2+) serves as cofactor.

Functionally, dephosphorylates the 5' and 2'(3')-phosphates of deoxyribonucleotides. The protein is Putative 5'(3')-deoxyribonucleotidase of Chlorobaculum tepidum (strain ATCC 49652 / DSM 12025 / NBRC 103806 / TLS) (Chlorobium tepidum).